Here is a 233-residue protein sequence, read N- to C-terminus: Small ribosomal subunit protein uS2 (233 aa).

It belongs to the universal ribosomal protein uS2 family.

The chain is Small ribosomal subunit protein uS2 from Bacillus mycoides (strain KBAB4) (Bacillus weihenstephanensis).